The following is a 244-amino-acid chain: 5-oxoprolinase subunit A (244 aa).

The protein belongs to the LamB/PxpA family. In terms of assembly, forms a complex composed of PxpA, PxpB and PxpC.

It catalyses the reaction 5-oxo-L-proline + ATP + 2 H2O = L-glutamate + ADP + phosphate + H(+). In terms of biological role, catalyzes the cleavage of 5-oxoproline to form L-glutamate coupled to the hydrolysis of ATP to ADP and inorganic phosphate. The protein is 5-oxoprolinase subunit A of Escherichia coli (strain K12).